A 437-amino-acid chain; its full sequence is Elongation factor 1-gamma (437 aa).

N-acetylalanine is present on Ala-2. Positions 2–87 (AAGTLYTYPE…YVSNEELRGS (86 aa)) constitute a GST N-terminal domain. Residues 88–216 (TPEAAAQVVQ…VKLCEKMAQF (129 aa)) form the GST C-terminal domain. N6-acetyllysine is present on residues Lys-147 and Lys-212. Over residues 221–254 (FAETQPKKDTPRKEKGSREEKQKPQAERKEEKKA) the composition is skewed to basic and acidic residues. The interval 221–268 (FAETQPKKDTPRKEKGSREEKQKPQAERKEEKKAAAPAPEEEMDECEQ) is disordered. Lys-253 participates in a covalent cross-link: Glycyl lysine isopeptide (Lys-Gly) (interchain with G-Cter in SUMO1). In terms of domain architecture, EF-1-gamma C-terminal spans 276 to 437 (AKDPFAHLPK…KAFNQGKIFK (162 aa)). Residue Lys-285 forms a Glycyl lysine isopeptide (Lys-Gly) (interchain with G-Cter in SUMO2) linkage. N6-acetyllysine is present on Lys-401. An N6-acetyllysine; alternate modification is found at Lys-434. Lys-434 carries the N6-malonyllysine; alternate modification.

As to quaternary structure, EF-1 is composed of four subunits: alpha, beta, delta, and gamma.

Probably plays a role in anchoring the complex to other cellular components. The sequence is that of Elongation factor 1-gamma (EEF1G) from Macaca fascicularis (Crab-eating macaque).